The primary structure comprises 306 residues: MGKLVIGSRGSELALWQANYIKERLKKECFIESEIQIVKTTGDKILDAPLNKIGGKGLFTKELEELLLKGTIDLAVHSLKDVPVVFEKGLDLACITKRADVRDTFLSTKFPDLMSLPKGAKVGTTSLRRSMQLKCKRKDLDTESLRGNVQTRLKKLESGEFDAIILAEAGLCRLNIQGAKYRKAFSVEEMIPSMGQGALGVEMLKSHKHFTALQKLNDEESAFCCHLEREFIKGLNGGCQIPVGVHASLMGEKVKIQAILGLPNGEEVIAKEKQGDKNKAFDSVQELLEAFLQSGAREILEKVQLF.

Cys-239 carries the S-(dipyrrolylmethanemethyl)cysteine modification.

Belongs to the HMBS family. Monomer. Dipyrromethane is required as a cofactor.

The enzyme catalyses 4 porphobilinogen + H2O = hydroxymethylbilane + 4 NH4(+). Its pathway is porphyrin-containing compound metabolism; protoporphyrin-IX biosynthesis; coproporphyrinogen-III from 5-aminolevulinate: step 2/4. Functionally, tetrapolymerization of the monopyrrole PBG into the hydroxymethylbilane pre-uroporphyrinogen in several discrete steps. The chain is Porphobilinogen deaminase from Helicobacter acinonychis (strain Sheeba).